Here is a 365-residue protein sequence, read N- to C-terminus: Methionine import ATP-binding protein MetN (365 aa).

In terms of domain architecture, ABC transporter spans 17-256; it reads IVFEHVTKEF…PQSETTQRFL (240 aa). Residue 53 to 60 participates in ATP binding; it reads GHSGAGKS. The tract at residues 346-365 is disordered; sequence SNSAAPTTSATVPTPTEEAH.

This sequence belongs to the ABC transporter superfamily. Methionine importer (TC 3.A.1.24) family. In terms of assembly, the complex is composed of two ATP-binding proteins (MetN), two transmembrane proteins (MetI) and a solute-binding protein (MetQ).

It localises to the cell membrane. The enzyme catalyses L-methionine(out) + ATP + H2O = L-methionine(in) + ADP + phosphate + H(+). The catalysed reaction is D-methionine(out) + ATP + H2O = D-methionine(in) + ADP + phosphate + H(+). Its function is as follows. Part of the ABC transporter complex MetNIQ involved in methionine import. Responsible for energy coupling to the transport system. This Cutibacterium acnes (strain DSM 16379 / KPA171202) (Propionibacterium acnes) protein is Methionine import ATP-binding protein MetN.